We begin with the raw amino-acid sequence, 764 residues long: PFL-like enzyme TdcE (764 aa).

Positions 7-629 (TSDKLYADAW…KTGNTPDGRR (623 aa)) constitute a PFL domain. Residue cysteine 423 is the S-acetylcysteine intermediate of the active site. Catalysis depends on cysteine 424, which acts as the Cysteine radical intermediate. Positions 622–645 (GNTPDGRRAGTPFAPGANPMHGRD) are disordered. Positions 636-764 (PGANPMHGRD…VISRTFTQAL (129 aa)) constitute a Glycine radical domain. A Glycine radical modification is found at glycine 739.

This sequence belongs to the glycyl radical enzyme (GRE) family. PFL subfamily.

It is found in the cytoplasm. The enzyme catalyses 2-oxobutanoate + CoA = propanoyl-CoA + formate. It catalyses the reaction formate + acetyl-CoA = pyruvate + CoA. It participates in amino-acid degradation; L-threonine degradation via propanoate pathway; propanoate from L-threonine: step 2/4. With respect to regulation, dependent on PFL-activase. Its function is as follows. Catalyzes the cleavage of 2-ketobutyrate to propionyl-CoA and formate. It can also use pyruvate as substrate. The polypeptide is PFL-like enzyme TdcE (tdcE) (Escherichia coli (strain K12)).